Here is a 532-residue protein sequence, read N- to C-terminus: Germ cell nuclear acidic-1 protein (532 aa).

Positions 1–10 (MPTPFRDLHN) are enriched in basic and acidic residues. Disordered stretches follow at residues 1-50 (MPTP…EPIS), 84-181 (REAP…GNFE), and 213-253 (YISE…DRKQ). Over residues 14–32 (ASASSYETAWSSSFSSRRS) the composition is skewed to low complexity. 3 stretches are compositionally biased toward basic and acidic residues: residues 39–48 (SNLKEIKDEP), 94–107 (LLQK…RDML), and 124–133 (KPKEVKKALK). Residues 213 to 235 (YISEESSEEESEEEEEDVDDEEY) show a composition bias toward acidic residues. Over residues 236–251 (RESSPEVEAKISYSDR) the composition is skewed to basic and acidic residues. The 91-residue stretch at 308–398 (RRIFSAIPSE…GARCSSVFKS (91 aa)) folds into the SprT-like domain. The interval 468 to 489 (AKPVGPILSNSSKPSPPAPRRI) is disordered.

The protein belongs to the serine-aspartate repeat-containing protein (SDr) family. As to quaternary structure, interacts with top-2; this interaction allows the resolution of topoisomerase II (top-2) DNA-protein cross-links. Mainly expressed in germ cells and early embryonic, proliferating cells.

It is found in the chromosome. Its function is as follows. May play a role in DNA-protein cross-links (DPCs) clearance through a SUMO-dependent recruitment to sites of DPCs, ensuring the genomic stability by protecting germ cells and early embryos from various sources of damage. May resolve the topoisomerase II (top-2) DPCs. Limits replication stress and DNA double-strand breaks. In Caenorhabditis elegans, this protein is Germ cell nuclear acidic-1 protein.